The primary structure comprises 377 residues: Alternative oxidase, mitochondrial (377 aa).

The chain crosses the membrane as a helical span at residues 149–169 (LSRFIFLESIAAVPGMVAGML). Fe cation-binding residues include Glu-156, Glu-195, and His-198. The helical transmembrane segment at 214–234 (ILIIGAQGVYFNAMFVAYLIS) threads the bilayer. Glu-246, Glu-303, and His-306 together coordinate Fe cation.

Belongs to the alternative oxidase family. It depends on Fe cation as a cofactor.

The protein localises to the mitochondrion inner membrane. Functionally, catalyzes cyanide-resistant oxygen consumption. May increase respiration when the cytochrome respiratory pathway is restricted, or in response to low temperatures. The protein is Alternative oxidase, mitochondrial (AOX1) of Pyricularia oryzae (strain 70-15 / ATCC MYA-4617 / FGSC 8958) (Rice blast fungus).